We begin with the raw amino-acid sequence, 210 residues long: Orotate phosphoribosyltransferase (210 aa).

5-phospho-alpha-D-ribose 1-diphosphate is bound by residues R96, K100, H102, and 122-130 (EDLISTGGS). Orotate is bound at residue S126.

The protein belongs to the purine/pyrimidine phosphoribosyltransferase family. PyrE subfamily. As to quaternary structure, homodimer. Mg(2+) is required as a cofactor.

The enzyme catalyses orotidine 5'-phosphate + diphosphate = orotate + 5-phospho-alpha-D-ribose 1-diphosphate. It functions in the pathway pyrimidine metabolism; UMP biosynthesis via de novo pathway; UMP from orotate: step 1/2. In terms of biological role, catalyzes the transfer of a ribosyl phosphate group from 5-phosphoribose 1-diphosphate to orotate, leading to the formation of orotidine monophosphate (OMP). This Streptococcus pneumoniae serotype 4 (strain ATCC BAA-334 / TIGR4) protein is Orotate phosphoribosyltransferase.